The primary structure comprises 83 residues: uncharacterized protein (83 aa).

This is an uncharacterized protein from Rickettsia prowazekii (strain Madrid E).